The sequence spans 460 residues: Chromosomal replication initiator protein DnaA (460 aa).

Residues 1 to 84 (MAVSLWQQCI…RFDIGSRPSA (84 aa)) form a domain I, interacts with DnaA modulators region. The segment at 84 to 123 (AKKPEPAPVAAVRVPNPQTKASVGTSFNTTEPVVNANHRS) is domain II. Positions 124 to 340 (NINPTYQFDN…GALNRVIANA (217 aa)) are domain III, AAA+ region. ATP is bound by residues Gly168, Gly170, Lys171, and Thr172. The domain IV, binds dsDNA stretch occupies residues 341-460 (NFTGRPITID…YANLIRTLSS (120 aa)).

This sequence belongs to the DnaA family. In terms of assembly, oligomerizes as a right-handed, spiral filament on DNA at oriC.

It localises to the cytoplasm. In terms of biological role, plays an essential role in the initiation and regulation of chromosomal replication. ATP-DnaA binds to the origin of replication (oriC) to initiate formation of the DNA replication initiation complex once per cell cycle. Binds the DnaA box (a 9 base pair repeat at the origin) and separates the double-stranded (ds)DNA. Forms a right-handed helical filament on oriC DNA; dsDNA binds to the exterior of the filament while single-stranded (ss)DNA is stabiized in the filament's interior. The ATP-DnaA-oriC complex binds and stabilizes one strand of the AT-rich DNA unwinding element (DUE), permitting loading of DNA polymerase. After initiation quickly degrades to an ADP-DnaA complex that is not apt for DNA replication. Binds acidic phospholipids. This chain is Chromosomal replication initiator protein DnaA, found in Shewanella sp. (strain MR-7).